We begin with the raw amino-acid sequence, 367 residues long: DNA replication and repair protein RecF (367 aa).

An ATP-binding site is contributed by 30-37; the sequence is GANGSGKT.

It belongs to the RecF family.

The protein resides in the cytoplasm. Functionally, the RecF protein is involved in DNA metabolism; it is required for DNA replication and normal SOS inducibility. RecF binds preferentially to single-stranded, linear DNA. It also seems to bind ATP. This chain is DNA replication and repair protein RecF, found in Pseudomonas putida (strain ATCC 47054 / DSM 6125 / CFBP 8728 / NCIMB 11950 / KT2440).